Consider the following 159-residue polypeptide: Protein Smg homolog (159 aa).

This sequence belongs to the Smg family.

The protein is Protein Smg homolog of Nitrosococcus oceani (strain ATCC 19707 / BCRC 17464 / JCM 30415 / NCIMB 11848 / C-107).